The sequence spans 380 residues: tRNA(Met) cytidine acetate ligase (380 aa).

Residues 7–20 (IAEYNPFHNGHLYQ), Gly-101, Asn-151, and Arg-176 each bind ATP.

This sequence belongs to the TmcAL family.

It is found in the cytoplasm. It catalyses the reaction cytidine(34) in elongator tRNA(Met) + acetate + ATP = N(4)-acetylcytidine(34) in elongator tRNA(Met) + AMP + diphosphate. In terms of biological role, catalyzes the formation of N(4)-acetylcytidine (ac(4)C) at the wobble position of elongator tRNA(Met), using acetate and ATP as substrates. First activates an acetate ion to form acetyladenylate (Ac-AMP) and then transfers the acetyl group to tRNA to form ac(4)C34. This is tRNA(Met) cytidine acetate ligase from Ligilactobacillus salivarius (strain UCC118) (Lactobacillus salivarius).